Reading from the N-terminus, the 433-residue chain is F-box/kelch-repeat protein At1g24800 (433 aa).

Positions 23–71 constitute an F-box domain; it reads TSMCDLPPKLVGEKILTRIPITSLRAVRSTCKLWNALTKDRVLGKAAAQ. 2 Kelch repeats span residues 170 to 216 and 286 to 337; these read HKIL…LYGV and VLYH…RFDN.

The sequence is that of F-box/kelch-repeat protein At1g24800 from Arabidopsis thaliana (Mouse-ear cress).